The chain runs to 307 residues: Elongation factor Ts (307 aa).

The segment at 79–82 is involved in Mg(2+) ion dislocation from EF-Tu; sequence TDFV.

Belongs to the EF-Ts family.

It localises to the cytoplasm. In terms of biological role, associates with the EF-Tu.GDP complex and induces the exchange of GDP to GTP. It remains bound to the aminoacyl-tRNA.EF-Tu.GTP complex up to the GTP hydrolysis stage on the ribosome. The polypeptide is Elongation factor Ts (Bartonella henselae (strain ATCC 49882 / DSM 28221 / CCUG 30454 / Houston 1) (Rochalimaea henselae)).